A 52-amino-acid chain; its full sequence is Phospholamban (52 aa).

Met1 bears the N-acetylmethionine mark. Topologically, residues 1-31 (MEKVQYLTRSAIRRASTIEMPQQARQKLQNL) are cytoplasmic. A Phosphoserine; by PKA and DMPK modification is found at Ser16. Positions 16–22 (STIEMPQ) are involved in HAX1 binding. Thr17 bears the Phosphothreonine; by CaMK2 mark. The chain crosses the membrane as a helical span at residues 32–52 (FINFCLILICLLLICIIVMLL). Cys36 carries S-palmitoyl cysteine lipidation.

The protein belongs to the phospholamban family. Homopentamer. Can also form heterooligomers with other sarcoplasmic/endoplasmic reticulum calcium ATPase (SERCA) regulators ARLN, ERLN, SLN and STRIT1/DWORF. Monomer. Interacts with HAX1. Interacts as a monomer with ATP2A2; the interaction decreases ATP2A2 Ca(2+) affinity. Interacts with VMP1; VMP1 competes with PLN and SLN to prevent them from forming an inhibitory complex with ATP2A2. Interacts with S100A1 in a Ca(2+)-dependent manner. In terms of processing, phosphorylation by PKA abolishes the inhibition of ATP2A2-mediated calcium uptake. Phosphorylated at Thr-17 by CaMK2, and in response to beta-adrenergic stimulation. Phosphorylation by DMPK may stimulate sarcoplasmic reticulum calcium uptake in cardiomyocytes. Palmitoylated by ZDHHC16, promoting formation of the homopentamer. Post-translationally, in elongated spermatids, proteolytically cleaved by SPPL2C which modulates intracellular Ca(2+) homeostasis. As to expression, heart muscle (at protein level).

It is found in the endoplasmic reticulum membrane. It localises to the sarcoplasmic reticulum membrane. The protein resides in the mitochondrion membrane. Its subcellular location is the membrane. Functionally, reversibly inhibits the activity of ATP2A2/SERCA2 in cardiac sarcoplasmic reticulum by decreasing the apparent affinity of the ATPase for Ca(2+). Binds preferentially to the ATP-bound E1 conformational form of ATP2A2 which predominates at low Ca(2+) concentrations during the diastolic phase of the cardiac cycle. Inhibits ATP2A2 Ca(2+) affinity by disrupting its allosteric activation by ATP. Modulates the contractility of the heart muscle in response to physiological stimuli via its effects on ATP2A2. Modulates calcium re-uptake during muscle relaxation and plays an important role in calcium homeostasis in the heart muscle. The degree of ATP2A2 inhibition depends on the oligomeric state of PLN. ATP2A2 inhibition is alleviated by PLN phosphorylation. Also inhibits the activity of ATP2A3/SERCA3. Controls intracellular Ca(2+) levels in elongated spermatids and may play a role in germ cell differentiation. In the thalamic reticular nucleus of the brain, plays a role in the regulation of sleep patterns and executive functioning. The protein is Phospholamban of Homo sapiens (Human).